The primary structure comprises 206 residues: Small ribosomal subunit protein uS4 (206 aa).

The S4 RNA-binding domain maps to 96-156; sequence GRLDNVVYRM…EKAKKQSRVK (61 aa).

The protein belongs to the universal ribosomal protein uS4 family. Part of the 30S ribosomal subunit. Contacts protein S5. The interaction surface between S4 and S5 is involved in control of translational fidelity.

In terms of biological role, one of the primary rRNA binding proteins, it binds directly to 16S rRNA where it nucleates assembly of the body of the 30S subunit. Its function is as follows. With S5 and S12 plays an important role in translational accuracy. This chain is Small ribosomal subunit protein uS4, found in Klebsiella pneumoniae (strain 342).